The sequence spans 346 residues: Biotin synthase (346 aa).

Residues Arg38–Thr256 form the Radical SAM core domain. Cys53, Cys57, and Cys60 together coordinate [4Fe-4S] cluster. Positions 97, 128, 188, and 260 each coordinate [2Fe-2S] cluster.

This sequence belongs to the radical SAM superfamily. Biotin synthase family. In terms of assembly, homodimer. The cofactor is [4Fe-4S] cluster. It depends on [2Fe-2S] cluster as a cofactor.

The catalysed reaction is (4R,5S)-dethiobiotin + (sulfur carrier)-SH + 2 reduced [2Fe-2S]-[ferredoxin] + 2 S-adenosyl-L-methionine = (sulfur carrier)-H + biotin + 2 5'-deoxyadenosine + 2 L-methionine + 2 oxidized [2Fe-2S]-[ferredoxin]. Its pathway is cofactor biosynthesis; biotin biosynthesis; biotin from 7,8-diaminononanoate: step 2/2. Its function is as follows. Catalyzes the conversion of dethiobiotin (DTB) to biotin by the insertion of a sulfur atom into dethiobiotin via a radical-based mechanism. This chain is Biotin synthase, found in Shigella boydii serotype 18 (strain CDC 3083-94 / BS512).